Consider the following 329-residue polypeptide: Succinylglutamate desuccinylase (329 aa).

3 residues coordinate Zn(2+): His53, Glu56, and His148. Glu211 is an active-site residue.

Belongs to the AspA/AstE family. Succinylglutamate desuccinylase subfamily. The cofactor is Zn(2+).

The enzyme catalyses N-succinyl-L-glutamate + H2O = L-glutamate + succinate. It functions in the pathway amino-acid degradation; L-arginine degradation via AST pathway; L-glutamate and succinate from L-arginine: step 5/5. Its function is as follows. Transforms N(2)-succinylglutamate into succinate and glutamate. This chain is Succinylglutamate desuccinylase, found in Erwinia tasmaniensis (strain DSM 17950 / CFBP 7177 / CIP 109463 / NCPPB 4357 / Et1/99).